A 284-amino-acid chain; its full sequence is MYVVSTKQMLNNAQRGGYAVPAFNIHNLETMQVVVETAASMHAPVIIAGTPGTFTHAGTENLMALVSAMAKQYHHPLAIHLDHHTKFDDIAQKVRSGVRSVMIDASHLPFAQNISRVKEVVDFCHRFDVSVEAELGQLGGQEDDVQVNEADALYTNPVQAREFAEATGIDSLAVAIGTAHGMYASAPALDFSRLENIRQWVNLPLVLHGASGLSTKDIQQTIKLGICKINVATELKNAFSQALKNYLTEHPEATDPRDYLQSAKFAMRDVVSKVIADCGCEGRA.

Residue Asp-82 is the Proton donor of the active site. Zn(2+) is bound by residues His-83 and His-180. Gly-181 lines the dihydroxyacetone phosphate pocket. Residue His-208 coordinates Zn(2+). Residues 209-211 and 230-233 contribute to the dihydroxyacetone phosphate site; these read GAS and NVAT.

It belongs to the class II fructose-bisphosphate aldolase family. TagBP aldolase GatY subfamily. In terms of assembly, forms a complex with GatZ. Zn(2+) is required as a cofactor.

The enzyme catalyses D-tagatofuranose 1,6-bisphosphate = D-glyceraldehyde 3-phosphate + dihydroxyacetone phosphate. The protein operates within carbohydrate metabolism; D-tagatose 6-phosphate degradation; D-glyceraldehyde 3-phosphate and glycerone phosphate from D-tagatose 6-phosphate: step 2/2. Functionally, catalytic subunit of the tagatose-1,6-bisphosphate aldolase GatYZ, which catalyzes the reversible aldol condensation of dihydroxyacetone phosphate (DHAP or glycerone-phosphate) with glyceraldehyde 3-phosphate (G3P) to produce tagatose 1,6-bisphosphate (TBP). Requires GatZ subunit for full activity and stability. Is involved in the catabolism of galactitol. In Escherichia coli (strain SMS-3-5 / SECEC), this protein is D-tagatose-1,6-bisphosphate aldolase subunit GatY.